We begin with the raw amino-acid sequence, 26 residues long: Thioredoxin H-type (26 aa).

It belongs to the thioredoxin family. Plant H-type subfamily.

The protein localises to the cytoplasm. Its function is as follows. Participates in various redox reactions through the reversible oxidation of the active center dithiol to a disulfide. The H form is known to activate a number of cytosolic enzymes. In Populus euphratica (Euphrates poplar), this protein is Thioredoxin H-type.